The chain runs to 902 residues: Potassium/sodium hyperpolarization-activated cyclic nucleotide-gated channel 1 (902 aa).

Positions Met-1–Gly-75 are disordered. Over Met-1 to Arg-131 the chain is Cytoplasmic. A helical membrane pass occupies residues Phe-132–Ile-153. Topologically, residues Thr-154–Thr-162 are extracellular. A helical membrane pass occupies residues Pro-163 to Phe-183. The Cytoplasmic segment spans residues Arg-184–Met-204. Residues Asn-205–Phe-225 traverse the membrane as a helical segment. Residues Leu-226–Thr-249 lie on the Extracellular side of the membrane. The helical; Voltage-sensor transmembrane segment at Lys-250–Trp-270 threads the bilayer. Residues Glu-271–Val-284 are Cytoplasmic-facing. Residues Val-285 to Leu-307 traverse the membrane as a helical segment. The Extracellular portion of the chain corresponds to Val-308–Gln-333. Asn-327 carries N-linked (GlcNAc...) asparagine glycosylation. The segment at residues Tyr-334–Pro-355 is an intramembrane region (pore-forming). The Selectivity filter signature appears at Cys-347–Gly-351. Over Val-356–Asp-360 the chain is Extracellular. Residues Leu-361–His-381 traverse the membrane as a helical segment. Residues Ala-382–Leu-902 are Cytoplasmic-facing. Residues Gly-528, Glu-529, Cys-531, Arg-538, Thr-539, Arg-579, and Arg-582 each coordinate 3',5'-cyclic AMP. Disordered stretches follow at residues Thr-634 to Ala-681, Ala-713 to Ser-824, and Met-858 to Leu-902. Composition is skewed to low complexity over residues Thr-639–Ser-680, Gln-720–Pro-736, and Gln-744–Gln-769. The span at Thr-770–Thr-793 shows a compositional bias: polar residues. Positions Arg-867–Ala-877 are enriched in pro residues. Positions Lys-889–Leu-902 are enriched in basic and acidic residues.

This sequence belongs to the potassium channel HCN family. Homotetramer. Heterotetramer with HCN2. The potassium channel is composed of a homo- or heterotetrameric complex of pore-forming subunits. Interacts with KCNE2. Interacts with the SH3 domain of CSK. As to expression, highly expressed in cerebral cortex, cerebellum, throughout the hippocampus, in medial habenula, anterior dorsal nucleus in the thalamus, tenia tecta, several nuclei of the general motor system and in optic nerve layer. Detected in a subset of elongated cells in taste buds.

The protein resides in the cell membrane. The catalysed reaction is Na(+)(in) = Na(+)(out). It catalyses the reaction K(+)(in) = K(+)(out). Activated by cAMP, and at 10-100 times higher concentrations, also by cGMP. cAMP binding promotes tetramerization and formation of an active channel. Compared to other family members, cAMP has less stimulatory effect on HCN1 because part of the molecules already contain bound cAMP and form homotetramers when cAMP levels are low, this inherent tetramerization in HCN1 results in a weaker response to increased cAMP. Hyperpolarization-activated ion channel that are permeable to sodium and potassium ions. Exhibits weak selectivity for potassium over sodium ions. Contributes to the native pacemaker currents in heart (If) and in neurons (Ih). Participates in cerebellar mechanisms of motor learning. May mediate responses to sour stimuli. This Rattus norvegicus (Rat) protein is Potassium/sodium hyperpolarization-activated cyclic nucleotide-gated channel 1 (Hcn1).